The following is a 443-amino-acid chain: Tol-Pal system protein TolB (443 aa).

The N-terminal stretch at 1–33 is a signal peptide; the sequence is MKIGIINTKIRTVFSAFACMIAASLVCTMPARA.

It belongs to the TolB family. In terms of assembly, the Tol-Pal system is composed of five core proteins: the inner membrane proteins TolA, TolQ and TolR, the periplasmic protein TolB and the outer membrane protein Pal. They form a network linking the inner and outer membranes and the peptidoglycan layer.

The protein resides in the periplasm. In terms of biological role, part of the Tol-Pal system, which plays a role in outer membrane invagination during cell division and is important for maintaining outer membrane integrity. The protein is Tol-Pal system protein TolB of Brucella melitensis biotype 1 (strain ATCC 23456 / CCUG 17765 / NCTC 10094 / 16M).